Here is an 899-residue protein sequence, read N- to C-terminus: Periodic tryptophan protein 2 homolog (899 aa).

WD repeat units follow at residues 9–52 (NLLG…TLPF), 53–92 (SHRK…VLYH), 94–132 (SFKA…DANA), 149–188 (QHFD…GFTP), 193–232 (GHRQ…GQDE), 252–291 (QNSA…MIHT), 294–334 (ISQN…YILK), 337–376 (GHFD…CIVT), 379–418 (EHTS…NFRT), 422–464 (PERL…DRLS), 465–504 (GHEG…QTSE), 507–546 (QLNS…QQAG), and 569–608 (AGTK…LLKK). Residues 639–668 (DEQGEASDFEDRIDRSLPGSKRGDPSARRK) are disordered. Residues 647 to 668 (FEDRIDRSLPGSKRGDPSARRK) show a composition bias toward basic and acidic residues. One copy of the WD 14 repeat lies at 669–709 (NPEVRVNGVAFSPNGSAFCAASTEGLLIYSLDTTIQFDPFD). The disordered stretch occupies residues 866 to 899 (TGSDEQPGAGGMSLNDVMQQDEGNASEDEWIGLV). Residues 889 to 899 (NASEDEWIGLV) are compositionally biased toward acidic residues.

Belongs to the WD repeat PWP2 family.

This is Periodic tryptophan protein 2 homolog from Neurospora crassa (strain ATCC 24698 / 74-OR23-1A / CBS 708.71 / DSM 1257 / FGSC 987).